Consider the following 309-residue polypeptide: GTP cyclohydrolase MptA 2 (309 aa).

The protein belongs to the GTP cyclohydrolase IV family. Homodimer. Fe(2+) is required as a cofactor.

It catalyses the reaction GTP + H2O = 7,8-dihydroneopterin 2',3'-cyclic phosphate + formate + diphosphate + H(+). It functions in the pathway cofactor biosynthesis; 5,6,7,8-tetrahydromethanopterin biosynthesis. Converts GTP to 7,8-dihydro-D-neopterin 2',3'-cyclic phosphate, the first intermediate in the biosynthesis of coenzyme methanopterin. The polypeptide is GTP cyclohydrolase MptA 2 (Methanocella arvoryzae (strain DSM 22066 / NBRC 105507 / MRE50)).